Consider the following 279-residue polypeptide: Very long chain fatty acid elongase 2 (279 aa).

The next 7 helical transmembrane spans lie at 12–32 (WFLL…LLSI), 50–70 (ILTL…VELV), 98–118 (VLWW…FFVL), 136–156 (MFNI…FFGP), 158–178 (LNSF…FPSM), 188–208 (LTQA…SAVV), and 213–233 (FPFG…ILFL). The Di-lysine motif signature appears at 276 to 279 (KKVQ).

The protein belongs to the ELO family. ELOVL2 subfamily. In terms of assembly, interacts with TECR.

It localises to the endoplasmic reticulum membrane. The enzyme catalyses a very-long-chain acyl-CoA + malonyl-CoA + H(+) = a very-long-chain 3-oxoacyl-CoA + CO2 + CoA. It catalyses the reaction (7Z,10Z,13Z,16Z,19Z)-docosapentaenoyl-CoA + malonyl-CoA + H(+) = (9Z,12Z,15Z,18Z,21Z)-3-oxotetracosapentaenoyl-CoA + CO2 + CoA. It carries out the reaction (5Z,8Z,11Z,14Z,17Z)-eicosapentaenoyl-CoA + malonyl-CoA + H(+) = 3-oxo-(7Z,10Z,13Z,16Z,19Z)-docosapentaenoyl-CoA + CO2 + CoA. The catalysed reaction is (5Z,8Z,11Z,14Z)-eicosatetraenoyl-CoA + malonyl-CoA + H(+) = (7Z,10Z,13Z,16Z)-3-oxodocosatetraenoyl-CoA + CO2 + CoA. The enzyme catalyses (7Z,10Z,13Z,16Z)-docosatetraenoyl-CoA + malonyl-CoA + H(+) = (9Z,12Z,15Z,18Z)-3-oxotetracosatetraenoyl-CoA + CO2 + CoA. Its pathway is lipid metabolism; polyunsaturated fatty acid biosynthesis. Its function is as follows. Catalyzes the first and rate-limiting reaction of the four reactions that constitute the long-chain fatty acids elongation cycle. This endoplasmic reticulum-bound enzymatic process allows the addition of 2 carbons to the chain of long- and very long-chain fatty acids (VLCFAs) per cycle. Condensing enzyme that catalyzes the synthesis of polyunsaturated very long chain fatty acid (C20- and C22-PUFA), acting specifically toward polyunsaturated acyl-CoA with the higher activity toward C20:4(n-6) acyl-CoA. May participate in the production of polyunsaturated VLCFAs of different chain lengths that are involved in multiple biological processes as precursors of membrane lipids and lipid mediators. The protein is Very long chain fatty acid elongase 2 of Rattus norvegicus (Rat).